The sequence spans 231 residues: Ion-translocating oxidoreductase complex subunit E (231 aa).

Transmembrane regions (helical) follow at residues 18–38, 39–59, 69–89, 93–113, 127–147, and 182–202; these read GLVQ…LTNA, LGLG…VSLV, IPVF…FINA, GLYL…VIIG, STFD…VLGA, and TFLL…LIAL.

Belongs to the NqrDE/RnfAE family. As to quaternary structure, the complex is composed of six subunits: RnfA, RnfB, RnfC, RnfD, RnfE and RnfG.

The protein localises to the cell inner membrane. In terms of biological role, part of a membrane-bound complex that couples electron transfer with translocation of ions across the membrane. This Shewanella piezotolerans (strain WP3 / JCM 13877) protein is Ion-translocating oxidoreductase complex subunit E.